A 194-amino-acid polypeptide reads, in one-letter code: Molybdenum cofactor guanylyltransferase (194 aa).

GTP-binding positions include 12 to 14 (LAG), lysine 25, asparagine 53, aspartate 70, and aspartate 100. Mg(2+) is bound at residue aspartate 100.

Belongs to the MobA family. Monomer. The cofactor is Mg(2+).

Its subcellular location is the cytoplasm. The catalysed reaction is Mo-molybdopterin + GTP + H(+) = Mo-molybdopterin guanine dinucleotide + diphosphate. Its function is as follows. Transfers a GMP moiety from GTP to Mo-molybdopterin (Mo-MPT) cofactor (Moco or molybdenum cofactor) to form Mo-molybdopterin guanine dinucleotide (Mo-MGD) cofactor. This chain is Molybdenum cofactor guanylyltransferase, found in Aliivibrio fischeri (strain ATCC 700601 / ES114) (Vibrio fischeri).